The chain runs to 553 residues: MRSDMIKKGLERTPHRALLKGTGVPQSQMEKPFIGVATSFTDLIPGHVGMRDLERYIEKGIHSGGGYAFFFGIPGVCDGISMGHKGMHYSLPTRELIADMVESVAEAHRLDGLVLLTNCDKITPGMLMAAARLDIPCIVVTAGPMMSGRGEAGRKYSFVTDTFEAMARYKAGVIDAQELQVCEDNACPGMGSCQGLFTANTMAILTETLGMSLPRCGTALAVSALKRRIAFASGERIVDLVKDNVTPRSILTRAAFENAIRVDLALGGSSNTVLHLLAIAHEAEVELPLETFDILAKETPQLASMNPAGEHFMEDLDTAGGVAGVLMQLGDKIKDNPTVMGLTIKQLAASIANVDETVIRPLSNPVKKEGGIAILSGNIAPKGAVVKQSGVSAAMMNFTGTARCFDSEEAAMAAIMEGKIVAGDCVVIRYEGPKGGPGMREMLAPTAAIMGLGLGDSVALITDGRFSGGTRGPCIGHISPEAAEGGPIALVEEGDRIELDIPGRRLQLLVDDETLAKRRRNWQAPAPKIRTGWLARYAKVVTSANTGAVTSAD.

Position 78 (Asp78) interacts with Mg(2+). Cys119 contributes to the [2Fe-2S] cluster binding site. Mg(2+) is bound by residues Asp120 and Lys121. At Lys121 the chain carries N6-carboxylysine. A [2Fe-2S] cluster-binding site is contributed by Cys193. Glu441 serves as a coordination point for Mg(2+). Residue Ser467 is the Proton acceptor of the active site.

The protein belongs to the IlvD/Edd family. Homodimer. The cofactor is [2Fe-2S] cluster. It depends on Mg(2+) as a cofactor.

The enzyme catalyses (2R)-2,3-dihydroxy-3-methylbutanoate = 3-methyl-2-oxobutanoate + H2O. It catalyses the reaction (2R,3R)-2,3-dihydroxy-3-methylpentanoate = (S)-3-methyl-2-oxopentanoate + H2O. It participates in amino-acid biosynthesis; L-isoleucine biosynthesis; L-isoleucine from 2-oxobutanoate: step 3/4. The protein operates within amino-acid biosynthesis; L-valine biosynthesis; L-valine from pyruvate: step 3/4. Functions in the biosynthesis of branched-chain amino acids. Catalyzes the dehydration of (2R,3R)-2,3-dihydroxy-3-methylpentanoate (2,3-dihydroxy-3-methylvalerate) into 2-oxo-3-methylpentanoate (2-oxo-3-methylvalerate) and of (2R)-2,3-dihydroxy-3-methylbutanoate (2,3-dihydroxyisovalerate) into 2-oxo-3-methylbutanoate (2-oxoisovalerate), the penultimate precursor to L-isoleucine and L-valine, respectively. In Geotalea daltonii (strain DSM 22248 / JCM 15807 / FRC-32) (Geobacter daltonii), this protein is Dihydroxy-acid dehydratase.